The following is a 318-amino-acid chain: tRNA methyltransferase 10 homolog B (318 aa).

Basic and acidic residues predominate over residues 1–10; that stretch reads MDCKSEESAQ. Residues 1–105 form a disordered region; it reads MDCKSEESAQ…DPGNGTCPQH (105 aa). Residues 52–63 show a composition bias toward polar residues; sequence SPANSAVWSSKN. Positions 64–83 are enriched in basic residues; sequence MQRKQRHWERIVSSKKSKRK. Residues 72–93 adopt a coiled-coil conformation; it reads ERIVSSKKSKRKQERERRKAKR. The span at 84–96 shows a compositional bias: basic and acidic residues; the sequence is QERERRKAKRAED. The SAM-dependent MTase TRM10-type domain maps to 114 to 311; sequence TKEKLLEAKH…KGVSPGKGYV (198 aa).

It belongs to the class IV-like SAM-binding methyltransferase superfamily. TRM10 family.

It catalyses the reaction guanosine(9) in tRNA + S-adenosyl-L-methionine = N(1)-methylguanosine(9) in tRNA + S-adenosyl-L-homocysteine + H(+). Functionally, S-adenosyl-L-methionine-dependent guanine N(1)-methyltransferase that catalyzes the formation of N(1)-methylguanine at position 9 (m1G9) in tRNAs. Probably not able to catalyze formation of N(1)-methyladenine at position 9 (m1A9) in tRNAs. The chain is tRNA methyltransferase 10 homolog B (Trmt10b) from Mus musculus (Mouse).